The primary structure comprises 376 residues: Cinnamyl alcohol dehydrogenase 2 (376 aa).

Cys-44 serves as a coordination point for Zn(2+). Ser-46 contributes to the NADP(+) binding site. Zn(2+) contacts are provided by His-66, Glu-67, Cys-97, Cys-100, Cys-103, Cys-111, and Cys-161. NADP(+) contacts are provided by residues Thr-165, 187–192 (GLGGLG), 210–215 (SRSSEK), Thr-250, Gly-274, and 297–299 (SQI).

It belongs to the zinc-containing alcohol dehydrogenase family. Homodimer. Requires Zn(2+) as cofactor. Expressed at the base of the stems.

It carries out the reaction (E)-cinnamyl alcohol + NADP(+) = (E)-cinnamaldehyde + NADPH + H(+). The catalysed reaction is (E)-coniferol + NADP(+) = (E)-coniferaldehyde + NADPH + H(+). It catalyses the reaction (E)-sinapyl alcohol + NADP(+) = (E)-sinapaldehyde + NADPH + H(+). The enzyme catalyses (E)-4-coumaroyl alcohol + NADP(+) = (E)-4-coumaraldehyde + NADPH + H(+). It carries out the reaction (E)-caffeyl alcohol + NADP(+) = (E)-caffeyl aldehyde + NADPH + H(+). The protein operates within aromatic compound metabolism; phenylpropanoid biosynthesis. In terms of biological role, involved in lignin biosynthesis. Catalyzes the final step specific for the production of lignin monomers. Catalyzes the NADPH-dependent reduction of coniferaldehyde, 5-hydroxyconiferaldehyde, sinapaldehyde, 4-coumaraldehyde and caffeyl aldehyde to their respective alcohols. In Arabidopsis thaliana (Mouse-ear cress), this protein is Cinnamyl alcohol dehydrogenase 2.